The primary structure comprises 166 residues: Protein FAM89A (166 aa).

Belongs to the FAM89 family.

In Xenopus laevis (African clawed frog), this protein is Protein FAM89A (fam89a).